A 644-amino-acid chain; its full sequence is Exoribonuclease 2 (644 aa).

The RNB domain maps to 189–516; that stretch reads REDLTALDFV…NHRLLKAVIK (328 aa). Residues 561 to 643 form the S1 motif domain; that stretch reads DTRFAAEIVD…ETRSIIARPV (83 aa).

It belongs to the RNR ribonuclease family. RNase II subfamily.

Its subcellular location is the cytoplasm. The catalysed reaction is Exonucleolytic cleavage in the 3'- to 5'-direction to yield nucleoside 5'-phosphates.. Its function is as follows. Involved in mRNA degradation. Hydrolyzes single-stranded polyribonucleotides processively in the 3' to 5' direction. The protein is Exoribonuclease 2 of Escherichia coli (strain SMS-3-5 / SECEC).